A 131-amino-acid polypeptide reads, in one-letter code: Holo-[acyl-carrier-protein] synthase (131 aa).

Mg(2+) is bound by residues D8 and E58.

This sequence belongs to the P-Pant transferase superfamily. AcpS family. Requires Mg(2+) as cofactor.

It localises to the cytoplasm. It carries out the reaction apo-[ACP] + CoA = holo-[ACP] + adenosine 3',5'-bisphosphate + H(+). Transfers the 4'-phosphopantetheine moiety from coenzyme A to a Ser of acyl-carrier-protein. The protein is Holo-[acyl-carrier-protein] synthase of Oenococcus oeni (strain ATCC BAA-331 / PSU-1).